A 116-amino-acid polypeptide reads, in one-letter code: MSEPQNGRGALFTGGLAAILASACCLGPLVLIALGFSGAWIGNLTVLEPYRPIFIGVALVALFFAWRRIYRPSAACKPGEVCAIPQVPATYKLIFWGVAVLVLVALGFPYVVPFFY.

2 helical membrane-spanning segments follow: residues 16-36 and 46-66; these read LAAI…ALGF and VLEP…FFAW. Hg(2+) is bound by residues C24 and C25. Hg(2+) contacts are provided by C76 and C82. The chain crosses the membrane as a helical span at residues 94–114; it reads IFWGVAVLVLVALGFPYVVPF.

Belongs to the MerT family.

The protein resides in the cell inner membrane. Involved in mercury resistance. Probably transfers a mercuric ion from the periplasmic Hg(2+)-binding protein MerP to the cytoplasmic mercuric reductase MerA. The chain is Mercuric transport protein MerT from Pseudomonas fluorescens.